The primary structure comprises 361 residues: WAT1-related protein At4g01450 (361 aa).

10 consecutive transmembrane segments (helical) span residues 8 to 28 (WAPM…NALV), 40 to 60 (VIAT…AYFW), 76 to 96 (LFVS…LGLS), 103 to 123 (GSAF…IFGF), 132 to 152 (IGYG…LLTM), 177 to 197 (WIKG…WMLI), 209 to 229 (YSST…LSLI), 243 to 263 (LTII…TVGM), 273 to 293 (VVSS…DFLI), and 298 to 318 (IYLG…IFLW). EamA domains follow at residues 21-142 (AGMV…GTLI) and 194-317 (WMLI…YIFL).

The protein belongs to the drug/metabolite transporter (DMT) superfamily. Plant drug/metabolite exporter (P-DME) (TC 2.A.7.4) family.

The protein localises to the membrane. This Arabidopsis thaliana (Mouse-ear cress) protein is WAT1-related protein At4g01450.